The primary structure comprises 300 residues: CDP-diacylglycerol--serine O-phosphatidyltransferase (300 aa).

The next 6 membrane-spanning stretches (helical) occupy residues 10–30, 74–94, 95–115, 135–155, 162–182, and 207–227; these read AVNL…AGLT, IDSL…LYAT, MLST…CVVL, EFFV…LLAL, GWWT…MLLI, and LAIF…VIIL.

It belongs to the CDP-alcohol phosphatidyltransferase class-I family.

Its subcellular location is the cell membrane. It catalyses the reaction a CDP-1,2-diacyl-sn-glycerol + L-serine = a 1,2-diacyl-sn-glycero-3-phospho-L-serine + CMP + H(+). This chain is CDP-diacylglycerol--serine O-phosphatidyltransferase (pssA), found in Mycobacterium leprae (strain TN).